A 130-amino-acid chain; its full sequence is Astrocytic phosphoprotein PEA-15 (130 aa).

The 79-residue stretch at 3–81 folds into the DED domain; it reads EYGTLLQDLT…RPDLLTMVVD (79 aa). Phosphoserine occurs at positions 61, 90, 104, and 116. The segment at 98–107 is microtubule-binding; the sequence is KLTRIPSAKK. Residues 122–129 form a microtubule-binding region; sequence KLAPPPKK.

Binds RPS6KA3, MAPK3 and MAPK1. Transient interaction with PLD1 and PLD2. Interacts with CASP8 and FADD. Phosphorylated by protein kinase C and calcium-calmodulin-dependent protein kinase. These phosphorylation events are modulated by neurotransmitters or hormones. As to expression, ubiquitously expressed. Most abundant in tissues such as heart, brain, muscle and adipose tissue which utilize glucose as an energy source. Lower expression in glucose-producing tissues. Higher levels of expression are found in tissues from individuals with type 2 diabetes than in controls.

The protein resides in the cytoplasm. Functionally, blocks Ras-mediated inhibition of integrin activation and modulates the ERK MAP kinase cascade. Inhibits RPS6KA3 activities by retaining it in the cytoplasm. Inhibits both TNFRSF6- and TNFRSF1A-mediated CASP8 activity and apoptosis. Regulates glucose transport by controlling both the content of SLC2A1 glucose transporters on the plasma membrane and the insulin-dependent trafficking of SLC2A4 from the cell interior to the surface. The sequence is that of Astrocytic phosphoprotein PEA-15 (PEA15) from Homo sapiens (Human).